The chain runs to 300 residues: Acetylglutamate kinase (300 aa).

Substrate-binding positions include 72–73 (GG), Arg94, and Asn197.

Belongs to the acetylglutamate kinase family. ArgB subfamily.

The protein resides in the cytoplasm. It catalyses the reaction N-acetyl-L-glutamate + ATP = N-acetyl-L-glutamyl 5-phosphate + ADP. It participates in amino-acid biosynthesis; L-arginine biosynthesis; N(2)-acetyl-L-ornithine from L-glutamate: step 2/4. Functionally, catalyzes the ATP-dependent phosphorylation of N-acetyl-L-glutamate. This chain is Acetylglutamate kinase, found in Azoarcus sp. (strain BH72).